A 243-amino-acid polypeptide reads, in one-letter code: Triosephosphate isomerase (243 aa).

9 to 11 (NWK) provides a ligand contact to substrate. The Electrophile role is filled by His96. Glu165 serves as the catalytic Proton acceptor. Residues Gly171, Ser204, and 225 to 226 (GG) contribute to the substrate site.

The protein belongs to the triosephosphate isomerase family. In terms of assembly, homodimer.

The protein localises to the cytoplasm. The catalysed reaction is D-glyceraldehyde 3-phosphate = dihydroxyacetone phosphate. It functions in the pathway carbohydrate biosynthesis; gluconeogenesis. Its pathway is carbohydrate degradation; glycolysis; D-glyceraldehyde 3-phosphate from glycerone phosphate: step 1/1. Functionally, involved in the gluconeogenesis. Catalyzes stereospecifically the conversion of dihydroxyacetone phosphate (DHAP) to D-glyceraldehyde-3-phosphate (G3P). This chain is Triosephosphate isomerase, found in Prochlorococcus marinus (strain MIT 9211).